The sequence spans 1258 residues: Cohesin subunit SA-1 (1258 aa).

The segment at 1-84 (MITSELPVLQ…HPQQNGEGEP (84 aa)) is disordered. The segment covering 10–19 (QDSTNETTAH) has biased composition (polar residues). Ser-24 bears the Phosphoserine mark. Residues 53–62 (SPGEKSRIEA) show a composition bias toward basic and acidic residues. One can recognise an SCD domain in the interval 296-381 (FVHRYRDAIA…NRFKDRIVSM (86 aa)). Phosphoserine is present on residues Ser-756, Ser-1062, and Ser-1065. Disordered stretches follow at residues 1055–1096 (GGED…SLDN) and 1129–1148 (MGDQ…DFLH). A compositionally biased stretch (low complexity) spans 1062–1074 (SVNSGSSSSKTSS). Positions 1076–1087 (RNKKGRPPLHKK) are enriched in basic residues. The residue at position 1093 (Ser-1093) is a Phosphoserine. The span at 1137–1146 (ESEHGSEPDF) shows a compositional bias: basic and acidic residues. Lys-1161 participates in a covalent cross-link: Glycyl lysine isopeptide (Lys-Gly) (interchain with G-Cter in SUMO2).

It belongs to the SCC3 family. In terms of assembly, cohesin complexes are composed of a heterodimer between a SMC1 protein (SMC1A or SMC1B) and SMC3, which are attached via their hinge domain, and RAD21 which link them at their heads, and one STAG protein (STAG1, STAG2 or STAG3). In cohesin complexes, STAG1 is mutually exclusive with STAG2 and STAG3. Interacts directly with RAD21 in cohesin complex. The cohesin complex interacts with the cohesin loading complex subunits NIPBL/Scc2 (via HEAT repeats) and MAU2/Scc4. NIPBL directly contacts all members of the complex, RAD21, SMC1A/B, SMC3 and STAG1. Post-translationally, phosphorylated by PLK1. The large dissociation of cohesin from chromosome arms during prophase is partly due to its phosphorylation.

The protein resides in the nucleus. Its subcellular location is the chromosome. It is found in the centromere. Component of cohesin complex, a complex required for the cohesion of sister chromatids after DNA replication. The cohesin complex apparently forms a large proteinaceous ring within which sister chromatids can be trapped. At anaphase, the complex is cleaved and dissociates from chromatin, allowing sister chromatids to segregate. The cohesin complex may also play a role in spindle pole assembly during mitosis. This chain is Cohesin subunit SA-1 (STAG1), found in Homo sapiens (Human).